Consider the following 436-residue polypeptide: APO protein 1, chloroplastic (436 aa).

The N-terminal 47 residues, 1–47 (MLLVSPACRGVYLQTIDPKPIDFSARASYALCFQIPTSIPKRECLMR), are a transit peptide targeting the chloroplast. APO domains follow at residues 155-240 (ACSE…EIPE) and 329-414 (ACGY…RVPQ).

This sequence belongs to the APO family. As to expression, expressed at low level. Expressed at higher level in leaves. Expressed at lower level in roots, stems, siliques and flowers.

The protein localises to the plastid. The protein resides in the chloroplast. Involved in the stable assembly of several 4Fe-4S cluster-containing complexes of chloroplasts. May participate in 4Fe-4S cofactor incorporation into psaA and/or psaB during translation. The protein is APO protein 1, chloroplastic (APO1) of Arabidopsis thaliana (Mouse-ear cress).